Consider the following 451-residue polypeptide: Bifunctional protein GlmU (451 aa).

A pyrophosphorylase region spans residues 1–236; the sequence is MDQTPSYSPP…YEELRGINSK (236 aa). Residues 17 to 20, Lys-31, Gln-79, 84 to 85, 105 to 107, Gly-144, Glu-162, Asn-177, and Asn-234 contribute to the UDP-N-acetyl-alpha-D-glucosamine site; these read LAAG, GT, and YGD. Position 107 (Asp-107) interacts with Mg(2+). Asn-234 is a binding site for Mg(2+). Residues 237-257 are linker; sequence VELAEAEATVQIVLRRKALEN. The tract at residues 258 to 451 is N-acetyltransferase; sequence GVTMTAPETV…EIRRQLKGSV (194 aa). UDP-N-acetyl-alpha-D-glucosamine-binding residues include Arg-323 and Lys-341. His-353 (proton acceptor) is an active-site residue. UDP-N-acetyl-alpha-D-glucosamine is bound by residues Tyr-356 and Asn-367. Acetyl-CoA-binding positions include Ala-370, 376–377, Ser-395, Ala-413, and Arg-430; that span reads NY.

It in the N-terminal section; belongs to the N-acetylglucosamine-1-phosphate uridyltransferase family. The protein in the C-terminal section; belongs to the transferase hexapeptide repeat family. In terms of assembly, homotrimer. Mg(2+) serves as cofactor.

Its subcellular location is the cytoplasm. It catalyses the reaction alpha-D-glucosamine 1-phosphate + acetyl-CoA = N-acetyl-alpha-D-glucosamine 1-phosphate + CoA + H(+). The catalysed reaction is N-acetyl-alpha-D-glucosamine 1-phosphate + UTP + H(+) = UDP-N-acetyl-alpha-D-glucosamine + diphosphate. Its pathway is nucleotide-sugar biosynthesis; UDP-N-acetyl-alpha-D-glucosamine biosynthesis; N-acetyl-alpha-D-glucosamine 1-phosphate from alpha-D-glucosamine 6-phosphate (route II): step 2/2. It functions in the pathway nucleotide-sugar biosynthesis; UDP-N-acetyl-alpha-D-glucosamine biosynthesis; UDP-N-acetyl-alpha-D-glucosamine from N-acetyl-alpha-D-glucosamine 1-phosphate: step 1/1. The protein operates within bacterial outer membrane biogenesis; LPS lipid A biosynthesis. Catalyzes the last two sequential reactions in the de novo biosynthetic pathway for UDP-N-acetylglucosamine (UDP-GlcNAc). The C-terminal domain catalyzes the transfer of acetyl group from acetyl coenzyme A to glucosamine-1-phosphate (GlcN-1-P) to produce N-acetylglucosamine-1-phosphate (GlcNAc-1-P), which is converted into UDP-GlcNAc by the transfer of uridine 5-monophosphate (from uridine 5-triphosphate), a reaction catalyzed by the N-terminal domain. This Granulibacter bethesdensis (strain ATCC BAA-1260 / CGDNIH1) protein is Bifunctional protein GlmU.